Consider the following 190-residue polypeptide: Threonylcarbamoyl-AMP synthase (190 aa).

The region spanning N7–G190 is the YrdC-like domain.

This sequence belongs to the SUA5 family. TsaC subfamily.

It is found in the cytoplasm. The catalysed reaction is L-threonine + hydrogencarbonate + ATP = L-threonylcarbamoyladenylate + diphosphate + H2O. Required for the formation of a threonylcarbamoyl group on adenosine at position 37 (t(6)A37) in tRNAs that read codons beginning with adenine. Catalyzes the conversion of L-threonine, HCO(3)(-)/CO(2) and ATP to give threonylcarbamoyl-AMP (TC-AMP) as the acyladenylate intermediate, with the release of diphosphate. This chain is Threonylcarbamoyl-AMP synthase, found in Yersinia pestis bv. Antiqua (strain Angola).